Consider the following 184-residue polypeptide: uncharacterized protein (184 aa).

To M.tuberculosis Rv0487.

This is an uncharacterized protein from Mycobacterium leprae (strain TN).